Consider the following 510-residue polypeptide: Myosin-binding protein C, cardiac-type (510 aa).

3 consecutive Ig-like C2-type domains span residues 177-269 (KKST…VKEP), 270-347 (PYSS…TVKT), and 378-438 (RDQA…SFIP).

Belongs to the immunoglobulin superfamily. MyBP family. As to expression, heart.

In terms of biological role, thick filament-associated protein located in the crossbridge region of vertebrate striated muscle a bands. In vitro it binds MHC, F-actin and native thin filaments, and modifies the activity of actin-activated myosin ATPase. It may modulate muscle contraction or may play a more structural role. This chain is Myosin-binding protein C, cardiac-type, found in Ambystoma mexicanum (Axolotl).